The primary structure comprises 273 residues: NAD(P)H-hydrate epimerase (273 aa).

The YjeF N-terminal domain maps to 18–257 (ALKLDEDLIN…LLAMEYDVQE (240 aa)). 71–75 (NNGGD) is a binding site for (6S)-NADPHX. Residues Asn72 and Asp146 each contribute to the K(+) site. Residues 150 to 157 (GFSFHGGP), Tyr162, and Asp188 contribute to the (6S)-NADPHX site. Ser191 provides a ligand contact to K(+).

It belongs to the NnrE/AIBP family. K(+) is required as a cofactor.

The catalysed reaction is (6R)-NADHX = (6S)-NADHX. The enzyme catalyses (6R)-NADPHX = (6S)-NADPHX. Its function is as follows. Catalyzes the epimerization of the S- and R-forms of NAD(P)HX, a damaged form of NAD(P)H that is a result of enzymatic or heat-dependent hydration. This is a prerequisite for the S-specific NAD(P)H-hydrate dehydratase to allow the repair of both epimers of NAD(P)HX. In Giardia intestinalis (strain ATCC 50803 / WB clone C6) (Giardia lamblia), this protein is NAD(P)H-hydrate epimerase.